The following is a 353-amino-acid chain: tRNA N6-adenosine threonylcarbamoyltransferase (353 aa).

Residues histidine 111 and histidine 115 each coordinate Fe cation. Residues 148-152, aspartate 181, glycine 194, and asparagine 286 contribute to the substrate site; that span reads LVSGG. Residue aspartate 314 coordinates Fe cation.

The protein belongs to the KAE1 / TsaD family. Fe(2+) is required as a cofactor.

The protein resides in the cytoplasm. It carries out the reaction L-threonylcarbamoyladenylate + adenosine(37) in tRNA = N(6)-L-threonylcarbamoyladenosine(37) in tRNA + AMP + H(+). Required for the formation of a threonylcarbamoyl group on adenosine at position 37 (t(6)A37) in tRNAs that read codons beginning with adenine. Is involved in the transfer of the threonylcarbamoyl moiety of threonylcarbamoyl-AMP (TC-AMP) to the N6 group of A37, together with TsaE and TsaB. TsaD likely plays a direct catalytic role in this reaction. The polypeptide is tRNA N6-adenosine threonylcarbamoyltransferase (Blochmanniella floridana).